Consider the following 728-residue polypeptide: 1,4-alpha-glucan branching enzyme GlgB (728 aa).

D405 acts as the Nucleophile in catalysis. E458 (proton donor) is an active-site residue.

This sequence belongs to the glycosyl hydrolase 13 family. GlgB subfamily. Monomer.

It catalyses the reaction Transfers a segment of a (1-&gt;4)-alpha-D-glucan chain to a primary hydroxy group in a similar glucan chain.. It participates in glycan biosynthesis; glycogen biosynthesis. Catalyzes the formation of the alpha-1,6-glucosidic linkages in glycogen by scission of a 1,4-alpha-linked oligosaccharide from growing alpha-1,4-glucan chains and the subsequent attachment of the oligosaccharide to the alpha-1,6 position. The sequence is that of 1,4-alpha-glucan branching enzyme GlgB from Salmonella typhi.